The primary structure comprises 269 residues: MQFRYLSLVRQQAPLEHCITNIVVTNFSANGLLALGASPFMSAMPQEVTEIQNFAQALLINIGTLNQSDVEAMLIAGKAANRTGVPVVLDPVGAGATLFRRKIVEQFLAEINFAVIRGNAAEIGFLAGTDWQGKGVDAGTGADSENLSRLAQSVAQKYRCVVALSGETDFISDGLKTYQICNGTRMLPKVTGSGCLLGAVIAAFLGVSPPQDYFSACTEACTVYAVAGELAAQGLSNEYGSFAMNFINQLGAIHETRLADKARVLAQHE.

M41 is a substrate binding site. The ATP site is built by R117 and S165. A substrate-binding site is contributed by G192.

The protein belongs to the Thz kinase family. The cofactor is Mg(2+).

The enzyme catalyses 5-(2-hydroxyethyl)-4-methylthiazole + ATP = 4-methyl-5-(2-phosphooxyethyl)-thiazole + ADP + H(+). It participates in cofactor biosynthesis; thiamine diphosphate biosynthesis; 4-methyl-5-(2-phosphoethyl)-thiazole from 5-(2-hydroxyethyl)-4-methylthiazole: step 1/1. In terms of biological role, catalyzes the phosphorylation of the hydroxyl group of 4-methyl-5-beta-hydroxyethylthiazole (THZ). In Actinobacillus succinogenes (strain ATCC 55618 / DSM 22257 / CCUG 43843 / 130Z), this protein is Hydroxyethylthiazole kinase.